The chain runs to 306 residues: 5'-hydroxyaverantin dehydrogenase (306 aa).

NADP(+) is bound by residues Ser25, Ile27, Gln48, Lys52, and Asp73. The active-site Proton donor is Ser173. 4 residues coordinate NADP(+): Tyr187, Lys191, Val220, and Thr222. Tyr187 acts as the Proton acceptor in catalysis. The active-site Lowers pKa of active site Tyr is the Lys191.

This sequence belongs to the short-chain dehydrogenases/reductases (SDR) family. As to quaternary structure, homodimer.

It localises to the cytoplasm. It is found in the cytosol. It carries out the reaction (1'S,5'S)-5'-hydroxyaverantin + NAD(+) = (S)-5'-oxoaverantin + NADH + H(+). The enzyme catalyses (1'S,5'R)-5'-hydroxyaverantin + NAD(+) = (S)-5'-oxoaverantin + NADH + 2 H(+). It functions in the pathway mycotoxin biosynthesis. 5'-hydroxyaverantin dehydrogenase; part of the fragmented gene cluster that mediates the biosynthesis of dothistromin (DOTH), a polyketide toxin very similar in structure to the aflatoxin precursor, versicolorin B. The first step of the pathway is the conversion of acetate to norsolorinic acid (NOR) and requires the fatty acid synthase subunits hexA and hexB, as well as the polyketide synthase pksA. PksA combines a hexanoyl starter unit and 7 malonyl-CoA extender units to synthesize the precursor NOR. The hexanoyl starter unit is provided to the acyl-carrier protein (ACP) domain by the fungal fatty acid synthase hexA/hexB. The second step is the conversion of NOR to averantin (AVN) and requires the norsolorinic acid ketoreductase nor1, which catalyzes the dehydration of norsolorinic acid to form (1'S)-averantin. The cytochrome P450 monooxygenase avnA then catalyzes the hydroxylation of AVN to 5'hydroxyaverantin (HAVN). The next step is performed by adhA that transforms HAVN to averufin (AVF). Averufin might then be converted to hydroxyversicolorone by cypX and avfA. Hydroxyversicolorone is further converted versiconal hemiacetal acetate (VHA) by moxY. VHA is then the substrate for the versiconal hemiacetal acetate esterase est1 to yield versiconal (VAL). Versicolorin B synthase vbsA then converts VAL to versicolorin B (VERB) by closing the bisfuran ring. Then, the activity of the versicolorin B desaturase verB leads to versicolorin A (VERA). DotB, a predicted chloroperoxidase, may perform epoxidation of the A-ring of VERA. Alternatively, a cytochrome P450, such as cypX or avnA could catalyze this step. It is also possible that another, uncharacterized, cytochrome P450 enzyme is responsible for this step. Opening of the epoxide could potentially be achieved by the epoxide hydrolase epoA. However, epoA seems not to be required for DOTH biosynthesis, but other epoxide hydrolases may have the ability to complement this hydrolysis. Alternatively, opening of the epoxide ring could be achieved non-enzymatically. The next step is the deoxygenation of ring A to yield the 5,8-dihydroxyanthraquinone which is most likely catalyzed by the NADPH dehydrogenase encoded by ver1. The last stages of DOTH biosynthesis are proposed to involve hydroxylation of the bisfuran. OrdB and norB might have oxidative roles here. An alternative possibility is that cytochrome P450 monoogenases such as avnA and cypX might perform these steps in addition to previously proposed steps. This Dothistroma septosporum (strain NZE10 / CBS 128990) (Red band needle blight fungus) protein is 5'-hydroxyaverantin dehydrogenase.